The sequence spans 361 residues: MTVRVIIAGGGTGGHLFPGVAIAEELLRRDRENRVLFVGTKRGIEKKVLKDLGFRLKLLNVEGIKGRGVMRSSLALLKLPGSLMQSMKIIRDFRPDVVIGVGGYASGPAVMAAHLMGIKTAIAEQNSIPGLTNRILGRFVDRVFLSFSDGGKWFSAKKAAVSGNPIRAAFFNGKPVLEKTGDQFSLLVFGGSQGAHAINSAFQDALPFLQLLKGCLRIVHQTGERDCESMAAAYSAQGFSARVVPFIRDMAAAYEAADLLICRAGATSIAEITAIGKAAILIPFPYAIGDHQTENAKVLLKAGAAVMIPEKDLTGKKLADEIQNFYSHPSLLKDMEAKAASLGNIYAASDIVDSCMAMIRL.

UDP-N-acetyl-alpha-D-glucosamine contacts are provided by residues 12–14, Asn-126, Arg-167, Ser-192, Ile-247, and Gln-292; that span reads TGG.

The protein belongs to the glycosyltransferase 28 family. MurG subfamily.

The protein resides in the cell inner membrane. It catalyses the reaction di-trans,octa-cis-undecaprenyl diphospho-N-acetyl-alpha-D-muramoyl-L-alanyl-D-glutamyl-meso-2,6-diaminopimeloyl-D-alanyl-D-alanine + UDP-N-acetyl-alpha-D-glucosamine = di-trans,octa-cis-undecaprenyl diphospho-[N-acetyl-alpha-D-glucosaminyl-(1-&gt;4)]-N-acetyl-alpha-D-muramoyl-L-alanyl-D-glutamyl-meso-2,6-diaminopimeloyl-D-alanyl-D-alanine + UDP + H(+). The protein operates within cell wall biogenesis; peptidoglycan biosynthesis. Cell wall formation. Catalyzes the transfer of a GlcNAc subunit on undecaprenyl-pyrophosphoryl-MurNAc-pentapeptide (lipid intermediate I) to form undecaprenyl-pyrophosphoryl-MurNAc-(pentapeptide)GlcNAc (lipid intermediate II). The polypeptide is UDP-N-acetylglucosamine--N-acetylmuramyl-(pentapeptide) pyrophosphoryl-undecaprenol N-acetylglucosamine transferase (Syntrophus aciditrophicus (strain SB)).